The sequence spans 376 residues: Erythronate-4-phosphate dehydrogenase (376 aa).

Substrate is bound by residues S45 and T67. D147 serves as a coordination point for NAD(+). Residue R209 is part of the active site. NAD(+) is bound at residue D233. Residue E238 is part of the active site. H255 functions as the Proton donor in the catalytic mechanism. G258 is an NAD(+) binding site. A substrate-binding site is contributed by Y259.

The protein belongs to the D-isomer specific 2-hydroxyacid dehydrogenase family. PdxB subfamily. In terms of assembly, homodimer.

It localises to the cytoplasm. It carries out the reaction 4-phospho-D-erythronate + NAD(+) = (R)-3-hydroxy-2-oxo-4-phosphooxybutanoate + NADH + H(+). The protein operates within cofactor biosynthesis; pyridoxine 5'-phosphate biosynthesis; pyridoxine 5'-phosphate from D-erythrose 4-phosphate: step 2/5. Catalyzes the oxidation of erythronate-4-phosphate to 3-hydroxy-2-oxo-4-phosphonooxybutanoate. The polypeptide is Erythronate-4-phosphate dehydrogenase (Shewanella halifaxensis (strain HAW-EB4)).